Reading from the N-terminus, the 1381-residue chain is Peroxisomal ATPase PEX6 (1381 aa).

The segment covering 1-10 has biased composition (polar residues); the sequence is MTAPNSTPAS. Disordered regions lie at residues 1–23, 247–315, 333–374, and 467–499; these read MTAP…QDKP, VRTS…DNLS, TVTG…DRPR, and YSSR…NPPA. A compositionally biased stretch (basic residues) spans 11 to 20; that stretch reads SRKRVRRRRQ. Composition is skewed to acidic residues over residues 270-284 and 296-315; these read AEDD…AEED and TDAD…DNLS. Composition is skewed to polar residues over residues 333-345, 355-367, and 487-499; these read TVTG…TGTP, GPGS…TATT, and FFEA…NPPA. 1031 to 1038 is a binding site for ATP; sequence GPPGTGKT. Basic and acidic residues-rich tracts occupy residues 1294-1305 and 1337-1350; these read GAKDKDKKKEGA and STKK…KAAD. The tract at residues 1294–1381 is disordered; sequence GAKDKDKKKE…GGDEDEGLYD (88 aa). Acidic residues predominate over residues 1372 to 1381; it reads GGDEDEGLYD.

Belongs to the AAA ATPase family. Interacts with PEX1; forming the PEX1-PEX6 AAA ATPase complex, which is composed of a heterohexamer formed by a trimer of PEX1-PEX6 dimers.

It localises to the cytoplasm. Its subcellular location is the cytosol. The protein localises to the peroxisome membrane. The enzyme catalyses ATP + H2O = ADP + phosphate + H(+). Functionally, component of the PEX1-PEX6 AAA ATPase complex, a protein dislocase complex that mediates the ATP-dependent extraction of the PEX5 receptor from peroxisomal membranes, an essential step for PEX5 recycling. Specifically recognizes PEX5 monoubiquitinated at 'Cys-6', and pulls it out of the peroxisome lumen through the PEX2-PEX10-PEX12 retrotranslocation channel. Extraction by the PEX1-PEX6 AAA ATPase complex is accompanied by unfolding of the TPR repeats and release of bound cargo from PEX5. In Neurospora crassa (strain ATCC 24698 / 74-OR23-1A / CBS 708.71 / DSM 1257 / FGSC 987), this protein is Peroxisomal ATPase PEX6 (pex-6).